A 345-amino-acid polypeptide reads, in one-letter code: High mobility group protein 20A (345 aa).

2 disordered regions span residues 1 to 124 and 167 to 198; these read MENT…TERP and QYQN…VRGV. 2 stretches are compositionally biased toward polar residues: residues 32-48 and 57-67; these read LSGS…PTLQ and LQQSGEQQLGN. Over residues 80–94 the composition is skewed to basic residues; it reads TRRGGWTKGRKRKRS. A DNA-binding region (HMG box) is located at residues 101-169; sequence PKAPLTGYVR…RYTKELQQYQ (69 aa). A compositionally biased stretch (basic and acidic residues) spans 112–124; it reads MNERREQLRTERP. Residues 167–180 show a composition bias toward polar residues; the sequence is QYQNTDAYQTYSRK. Positions 227 to 290 form a coiled coil; sequence SKAREAELRQ…QHLQSVRQAL (64 aa).

The protein resides in the nucleus. Functionally, plays a role in neuronal differentiation. The polypeptide is High mobility group protein 20A (hmg20a) (Xenopus tropicalis (Western clawed frog)).